The primary structure comprises 264 residues: Indole-3-glycerol phosphate synthase (264 aa).

Belongs to the TrpC family.

The catalysed reaction is 1-(2-carboxyphenylamino)-1-deoxy-D-ribulose 5-phosphate + H(+) = (1S,2R)-1-C-(indol-3-yl)glycerol 3-phosphate + CO2 + H2O. The protein operates within amino-acid biosynthesis; L-tryptophan biosynthesis; L-tryptophan from chorismate: step 4/5. In Stenotrophomonas maltophilia (strain K279a), this protein is Indole-3-glycerol phosphate synthase.